Here is a 435-residue protein sequence, read N- to C-terminus: Adenylosuccinate synthetase (435 aa).

GTP contacts are provided by residues 11-17 (GDEGKGK) and 39-41 (GHT). Aspartate 12 functions as the Proton acceptor in the catalytic mechanism. Mg(2+) contacts are provided by aspartate 12 and glycine 39. IMP contacts are provided by residues 12–15 (DEGK), 37–40 (NAGH), threonine 128, arginine 142, glutamine 223, threonine 238, and arginine 302. Histidine 40 functions as the Proton donor in the catalytic mechanism. Residue 298–304 (SVTGRPR) coordinates substrate. GTP is bound by residues arginine 304, 330-332 (KLD), and 412-414 (STG).

The protein belongs to the adenylosuccinate synthetase family. Homodimer. Mg(2+) serves as cofactor.

Its subcellular location is the cytoplasm. The enzyme catalyses IMP + L-aspartate + GTP = N(6)-(1,2-dicarboxyethyl)-AMP + GDP + phosphate + 2 H(+). Its pathway is purine metabolism; AMP biosynthesis via de novo pathway; AMP from IMP: step 1/2. In terms of biological role, plays an important role in the de novo pathway of purine nucleotide biosynthesis. Catalyzes the first committed step in the biosynthesis of AMP from IMP. This is Adenylosuccinate synthetase from Coxiella burnetii (strain CbuK_Q154) (Coxiella burnetii (strain Q154)).